The following is a 167-amino-acid chain: MNQSYFNLLGNITWLWMNSPLHKEWSCELLARNVIPAIENEQYMLLIDDGIPVAYCSWADLNLENEVKYIKDISSLTLEEWQSGDRRWIIDWVAPFGHSQLLYKKMCQKYPDMIVRSIRFQPNQKSVGKISYFKGGKLDKKTAKKRFDTYQEELATALKNEFNFIKK.

Catalysis depends on residues histidine 22 and aspartate 91.

The protein belongs to the RTX toxin acyltransferase family.

It is found in the cytoplasm. It carries out the reaction a fatty acyl-[ACP] + L-lysyl-[protein] = N(6)-(fatty acyl)-L-lysyl-[protein] + holo-[ACP] + H(+). Functionally, involved in fatty acylation of the protoxin (LktA) at two internal lysine residues, thereby converting it to the active toxin. The protein is Leukotoxin-activating lysine-acyltransferase LktC serotype A11 (lktC) of Mannheimia haemolytica (Pasteurella haemolytica).